The chain runs to 273 residues: 4-diphosphocytidyl-2-C-methyl-D-erythritol kinase (273 aa).

The active site involves Lys-9. ATP is bound at residue 90–100 (PVAAGLGGGSA). The active site involves Asp-129.

Belongs to the GHMP kinase family. IspE subfamily.

It carries out the reaction 4-CDP-2-C-methyl-D-erythritol + ATP = 4-CDP-2-C-methyl-D-erythritol 2-phosphate + ADP + H(+). Its pathway is isoprenoid biosynthesis; isopentenyl diphosphate biosynthesis via DXP pathway; isopentenyl diphosphate from 1-deoxy-D-xylulose 5-phosphate: step 3/6. Functionally, catalyzes the phosphorylation of the position 2 hydroxy group of 4-diphosphocytidyl-2C-methyl-D-erythritol. This chain is 4-diphosphocytidyl-2-C-methyl-D-erythritol kinase, found in Erythrobacter litoralis (strain HTCC2594).